Reading from the N-terminus, the 832-residue chain is MALPPSSPSPSSPSLQRLSTFKNPPPSSLSSGAPPPQTPSSSSSSPLDSFATDPILSPFLSSSFSSASFSSAALASGSPASTAERLHQAIRLLDSQLRNDVISRHPELLAQLSSLSHADVSLSSLRSSVSSLQSSIRRVRSDLSEPIKSIRSKSVQLSNLHTATELLSHSVRTLRLSKKLRDLADFPDPDKIDLTKAAQFHFEILTMCKEYDLFGIDVIDEEIKFVTEIGEKLRSEAMKVLERGMEGLNQAEVGTGLQVFYNLGELKSTVDQLVNKYKGMAVKSVSVAMDMKAITSGSGGGFGPGGIRSSGSPHIGGGAKVREALWQRMASCMEQLCSLVVAVWHLQRVLSKKRDPFTHVLLLDEVIKEGDSMLTDRVWDALVKAFTSQMKSAYTASSFVKEIFTMGYPKLVSMIENLLERISRDTDVKGVLPAINLERKEQMVACIAIFQTAFLSLCFGRLSDLVNSIFPMSSRGSLPSKEQISQVLSHIQDEIEAVHPDARLTLLVLREIGKALSNLAQRAECQISTGPETRQISGPATSTQIRNFTLCQHLQGIHTHISSMVADLPSIATDVLSPYLAAIYDAACEPVTPLFKAMRDKLESCILQIHDQNFGADDADMDNNASSYMEELQRSILHFRKEFLSRLLPSAANANTAGTESICTRLTRQMASRVLIFYIRHASLVRPLSEWGKLRMAKDMAELELAVGQNLFPVEQLGAPYRALRAFRPLVFLETSQMGSSPLINDLPPSIVLHHLYTRGPDELESPMQKNRLSPKQYSLWLDNQREDQIWKGIKATLDDYAVKIRSRGDKEFSPVYPLMLQIGSSLTQENL.

2 stretches are compositionally biased toward pro residues: residues 1–11 and 23–38; these read MALPPSSPSPS and NPPP…PPQT. The disordered stretch occupies residues 1-49; it reads MALPPSSPSPSSPSLQRLSTFKNPPPSSLSSGAPPPQTPSSSSSSPLDS. Residues 39–49 show a composition bias toward low complexity; sequence PSSSSSSPLDS.

The protein belongs to the COG5 family. In terms of assembly, homodimer. Component of the conserved oligomeric Golgi complex which is composed of eight different subunits and is required for normal Golgi morphology and localization. Interacts with COG3, COG6, COG7 and COG8.

Its subcellular location is the golgi apparatus membrane. Functionally, required for normal Golgi function. The sequence is that of Conserved oligomeric Golgi complex subunit 5 from Arabidopsis thaliana (Mouse-ear cress).